Reading from the N-terminus, the 147-residue chain is MREVIIYTDGACSGNPGPGGWGAVLLYGSHRKELSGFHPHTTNNRMEIQAAIEALRALKYPCKVKLYSDSAYLVNAFRQNWLRTWQRNGWVNSRKQPVENQDLWQELLEAARPHQVEWLKVQGHADVAENNRCDELARAAIAAGTQG.

The RNase H type-1 domain occupies 1-142; it reads MREVIIYTDG…CDELARAAIA (142 aa). Residues Asp-9, Glu-47, Asp-69, and Asp-134 each coordinate Mg(2+).

This sequence belongs to the RNase H family. In terms of assembly, monomer. It depends on Mg(2+) as a cofactor.

The protein resides in the cytoplasm. It catalyses the reaction Endonucleolytic cleavage to 5'-phosphomonoester.. Its function is as follows. Endonuclease that specifically degrades the RNA of RNA-DNA hybrids. In Symbiobacterium thermophilum (strain DSM 24528 / JCM 14929 / IAM 14863 / T), this protein is Ribonuclease H.